We begin with the raw amino-acid sequence, 159 residues long: Ribosomal RNA large subunit methyltransferase H (159 aa).

S-adenosyl-L-methionine-binding residues include L76 and G108.

This sequence belongs to the RNA methyltransferase RlmH family. As to quaternary structure, homodimer.

It is found in the cytoplasm. It carries out the reaction pseudouridine(1915) in 23S rRNA + S-adenosyl-L-methionine = N(3)-methylpseudouridine(1915) in 23S rRNA + S-adenosyl-L-homocysteine + H(+). In terms of biological role, specifically methylates the pseudouridine at position 1915 (m3Psi1915) in 23S rRNA. This is Ribosomal RNA large subunit methyltransferase H from Lactiplantibacillus plantarum (strain ATCC BAA-793 / NCIMB 8826 / WCFS1) (Lactobacillus plantarum).